The sequence spans 371 residues: 4-hydroxy-3-methylbut-2-en-1-yl diphosphate synthase (flavodoxin) (371 aa).

4 residues coordinate [4Fe-4S] cluster: C270, C273, C305, and E312.

Belongs to the IspG family. [4Fe-4S] cluster is required as a cofactor.

The catalysed reaction is (2E)-4-hydroxy-3-methylbut-2-enyl diphosphate + oxidized [flavodoxin] + H2O + 2 H(+) = 2-C-methyl-D-erythritol 2,4-cyclic diphosphate + reduced [flavodoxin]. The protein operates within isoprenoid biosynthesis; isopentenyl diphosphate biosynthesis via DXP pathway; isopentenyl diphosphate from 1-deoxy-D-xylulose 5-phosphate: step 5/6. In terms of biological role, converts 2C-methyl-D-erythritol 2,4-cyclodiphosphate (ME-2,4cPP) into 1-hydroxy-2-methyl-2-(E)-butenyl 4-diphosphate. In Shewanella loihica (strain ATCC BAA-1088 / PV-4), this protein is 4-hydroxy-3-methylbut-2-en-1-yl diphosphate synthase (flavodoxin).